A 690-amino-acid polypeptide reads, in one-letter code: Methionine--tRNA ligase (690 aa).

The short motif at 13–23 (PYANGQIHIGH) is the 'HIGH' region element. Zn(2+) is bound by residues C144, C147, C157, and C160. The short motif at 335–339 (KMSKS) is the 'KMSKS' region element. Residue K338 participates in ATP binding. One can recognise a tRNA-binding domain in the interval 584 to 690 (DFAKIDLRVA…SGAVPGMRIR (107 aa)).

This sequence belongs to the class-I aminoacyl-tRNA synthetase family. MetG type 1 subfamily. As to quaternary structure, homodimer. Zn(2+) is required as a cofactor.

The protein resides in the cytoplasm. It catalyses the reaction tRNA(Met) + L-methionine + ATP = L-methionyl-tRNA(Met) + AMP + diphosphate. Functionally, is required not only for elongation of protein synthesis but also for the initiation of all mRNA translation through initiator tRNA(fMet) aminoacylation. The polypeptide is Methionine--tRNA ligase (Cupriavidus metallidurans (strain ATCC 43123 / DSM 2839 / NBRC 102507 / CH34) (Ralstonia metallidurans)).